Here is a 203-residue protein sequence, read N- to C-terminus: Thymidylate kinase (203 aa).

14–21 (GMDGIGKS) provides a ligand contact to ATP.

It belongs to the thymidylate kinase family.

The catalysed reaction is dTMP + ATP = dTDP + ADP. Functionally, phosphorylation of dTMP to form dTDP in both de novo and salvage pathways of dTTP synthesis. This Rickettsia typhi (strain ATCC VR-144 / Wilmington) protein is Thymidylate kinase.